A 323-amino-acid chain; its full sequence is Thiamine-monophosphate kinase (323 aa).

Residues Asp-30, Ser-45, Thr-46, and Asp-47 each contribute to the Mg(2+) site. Substrate is bound at residue His-54. Asp-75 and Asp-122 together coordinate Mg(2+). Residues 121–122 and Arg-146 each bind ATP; that span reads GD. Residue Asp-212 participates in Mg(2+) binding. ATP is bound at residue Ser-214. Asp-215 is a binding site for Mg(2+). The substrate site is built by Glu-263 and Phe-319.

The protein belongs to the thiamine-monophosphate kinase family.

It carries out the reaction thiamine phosphate + ATP = thiamine diphosphate + ADP. The protein operates within cofactor biosynthesis; thiamine diphosphate biosynthesis; thiamine diphosphate from thiamine phosphate: step 1/1. In terms of biological role, catalyzes the ATP-dependent phosphorylation of thiamine-monophosphate (TMP) to form thiamine-pyrophosphate (TPP), the active form of vitamin B1. The polypeptide is Thiamine-monophosphate kinase (Buchnera aphidicola subsp. Acyrthosiphon pisum (strain APS) (Acyrthosiphon pisum symbiotic bacterium)).